The chain runs to 73 residues: Large ribosomal subunit protein bL31 (73 aa).

Belongs to the bacterial ribosomal protein bL31 family. Type A subfamily. Part of the 50S ribosomal subunit.

Binds the 23S rRNA. The chain is Large ribosomal subunit protein bL31 from Rhizobium rhizogenes (strain K84 / ATCC BAA-868) (Agrobacterium radiobacter).